Consider the following 302-residue polypeptide: uncharacterized protein (302 aa).

Residues Met-1 to Ala-52 form the signal peptide.

The protein belongs to the MG439/MG440 family.

This is an uncharacterized protein from Mycoplasma pneumoniae (strain ATCC 29342 / M129 / Subtype 1) (Mycoplasmoides pneumoniae).